A 205-amino-acid chain; its full sequence is Putative 3-methyladenine DNA glycosylase (205 aa).

Belongs to the DNA glycosylase MPG family.

This chain is Putative 3-methyladenine DNA glycosylase, found in Clostridium acetobutylicum (strain ATCC 824 / DSM 792 / JCM 1419 / IAM 19013 / LMG 5710 / NBRC 13948 / NRRL B-527 / VKM B-1787 / 2291 / W).